Consider the following 277-residue polypeptide: Large ribosomal subunit protein uL2 (277 aa).

2 disordered regions span residues 28–55 (EPEK…RHRG) and 207–277 (KAGR…RTQG). Composition is skewed to basic residues over residues 34 to 43 (THHKHSKQGR), 209 to 220 (GRTRHRGQRPHV), and 255 to 265 (LGRKTRNKKKR).

The protein belongs to the universal ribosomal protein uL2 family. Part of the 50S ribosomal subunit. Forms a bridge to the 30S subunit in the 70S ribosome.

Its function is as follows. One of the primary rRNA binding proteins. Required for association of the 30S and 50S subunits to form the 70S ribosome, for tRNA binding and peptide bond formation. It has been suggested to have peptidyltransferase activity; this is somewhat controversial. Makes several contacts with the 16S rRNA in the 70S ribosome. The chain is Large ribosomal subunit protein uL2 from Microcystis aeruginosa (strain NIES-843 / IAM M-2473).